The following is a 399-amino-acid chain: Lovastatin esterase (399 aa).

Serine 57 serves as the catalytic Nucleophile. Residues lysine 60 and tyrosine 170 each act as proton acceptor in the active site.

This sequence belongs to the class-A beta-lactamase family.

It carries out the reaction lovastatin + H2O = monacolin J + (S)-2-methylbutanoate + H(+). The enzyme catalyses pravastatin lactone + H2O = pravastatin diol lactone + (S)-2-methylbutanoate + H(+). The catalysed reaction is mevastatin + H2O = compactin diol lactone + (S)-2-methylbutanoate + H(+). Esterase that can hydrolyze the side chain of lovastatin to produce monacolin J. Is also able to hydrolyze the side chains of mevastatin and pravastatin, but not simvastatin. In Penicillium rubens (strain ATCC 28089 / DSM 1075 / NRRL 1951 / Wisconsin 54-1255) (Penicillium chrysogenum), this protein is Lovastatin esterase.